We begin with the raw amino-acid sequence, 317 residues long: MVTLIVATTADPASINPAAALLAMPGWTAGPILPPDIKSFSNKQTRVIQHDRSIVKEDDLDLRWEEATGEVVDEVIFLSRHTAVSNRPALTVHPIGVLHLKDGESPPQGGKPGWAALPSTRIGPWFRLLKKMAEAHGLVPEFEITLEATHHGPITNKPTMFLEIGSTEEYWKRQDAAQVMALLMWEGLGLGGSEEVGKWKSETGKRKVLLGIGGGHYAPRHMDIALKDDIWVGHLLSGYSLPMEDPTQTKTTPGENYIGGNWRQSIKAAFEATKASFPGGEILAHLDHKSFKGWQKKAITEFLAEESINVGKPNDFT.

This sequence belongs to the DtdA deacylase family. Requires Zn(2+) as cofactor. Ubiquitous.

It is found in the nucleus. Its subcellular location is the cytoplasm. It carries out the reaction a D-aminoacyl-tRNA + H2O = a tRNA + a D-alpha-amino acid + H(+). The catalysed reaction is glycyl-tRNA(Ala) + H2O = tRNA(Ala) + glycine + H(+). Hydrolyzes D-aminoacyl-tRNA into D-amino acid and free tRNA. Broad specificity toward the amino acid, but strict specificity toward the D-isomer. Seems to be required for ethanol tolerance. This is D-aminoacyl-tRNA deacylase (GEK1) from Arabidopsis thaliana (Mouse-ear cress).